The following is a 498-amino-acid chain: Glycerol kinase (498 aa).

Thr-12 contributes to the ADP binding site. ATP-binding residues include Thr-12, Thr-13, and Ser-14. Residue Thr-12 participates in sn-glycerol 3-phosphate binding. Position 16 (Arg-16) interacts with ADP. Residues Arg-82, Glu-83, Tyr-134, and Asp-244 each coordinate sn-glycerol 3-phosphate. Glycerol-binding residues include Arg-82, Glu-83, Tyr-134, Asp-244, and Gln-245. Positions 266 and 310 each coordinate ADP. Positions 266, 310, 314, and 411 each coordinate ATP. 2 residues coordinate ADP: Gly-411 and Asn-415.

It belongs to the FGGY kinase family.

It catalyses the reaction glycerol + ATP = sn-glycerol 3-phosphate + ADP + H(+). It functions in the pathway polyol metabolism; glycerol degradation via glycerol kinase pathway; sn-glycerol 3-phosphate from glycerol: step 1/1. Its activity is regulated as follows. Inhibited by fructose 1,6-bisphosphate (FBP). In terms of biological role, key enzyme in the regulation of glycerol uptake and metabolism. Catalyzes the phosphorylation of glycerol to yield sn-glycerol 3-phosphate. The chain is Glycerol kinase from Chloroflexus aurantiacus (strain ATCC 29364 / DSM 637 / Y-400-fl).